A 159-amino-acid polypeptide reads, in one-letter code: MAVLLKLGVLCSGQGARALLLRSRVVRPAYVSAFLQDQPTQGRCGTQHIHLSPSHHSGSKAASLHWTSERVVSVLLLGLIPAGYLNPCSVVDYSLAAALTLHSHWGLGQVVTDYVHGDTLPKAARAGLLALSALTFAGLCYFNYHDVGICRAVAMLWKL.

The transit peptide at 1 to 56 (MAVLLKLGVLCSGQGARALLLRSRVVRPAYVSAFLQDQPTQGRCGTQHIHLSPSHH) directs the protein to the mitochondrion. The Mitochondrial matrix segment spans residues 57 to 63 (SGSKAAS). Residues 64–85 (LHWTSERVVSVLLLGLIPAGYL) form a helical membrane-spanning segment. Over 86–90 (NPCSV) the chain is Mitochondrial intermembrane. Residues 91–111 (VDYSLAAALTLHSHWGLGQVV) traverse the membrane as a helical segment. His-102 is a binding site for heme b. The Mitochondrial matrix segment spans residues 112-120 (TDYVHGDTL). Tyr-114 lines the a ubiquinone pocket. The helical transmembrane segment at 121 to 142 (PKAARAGLLALSALTFAGLCYF) threads the bilayer. The Mitochondrial intermembrane portion of the chain corresponds to 143 to 159 (NYHDVGICRAVAMLWKL).

This sequence belongs to the CybS family. In terms of assembly, component of complex II composed of four subunits: the flavoprotein (FP) SDHA, iron-sulfur protein (IP) SDHB, and a cytochrome b560 composed of SDHC and SDHD.

The protein localises to the mitochondrion inner membrane. It participates in carbohydrate metabolism; tricarboxylic acid cycle. In terms of biological role, membrane-anchoring subunit of succinate dehydrogenase (SDH) that is involved in complex II of the mitochondrial electron transport chain and is responsible for transferring electrons from succinate to ubiquinone (coenzyme Q). SDH also oxidizes malate to the non-canonical enol form of oxaloacetate, enol-oxaloacetate. Enol-oxaloacetate, which is a potent inhibitor of the succinate dehydrogenase activity, is further isomerized into keto-oxaloacetate. The sequence is that of Succinate dehydrogenase [ubiquinone] cytochrome b small subunit, mitochondrial (Sdhd) from Mus musculus (Mouse).